The following is a 356-amino-acid chain: sn-glycerol-3-phosphate import ATP-binding protein UgpC (356 aa).

Residues 4 to 235 (LKLQAVTKSW…PASRFVASFI (232 aa)) enclose the ABC transporter domain. 37-44 (GPSGCGKS) serves as a coordination point for ATP.

This sequence belongs to the ABC transporter superfamily. sn-glycerol-3-phosphate importer (TC 3.A.1.1.3) family. The complex is composed of two ATP-binding proteins (UgpC), two transmembrane proteins (UgpA and UgpE) and a solute-binding protein (UgpB).

It localises to the cell inner membrane. It carries out the reaction sn-glycerol 3-phosphate(out) + ATP + H2O = sn-glycerol 3-phosphate(in) + ADP + phosphate + H(+). In terms of biological role, part of the ABC transporter complex UgpBAEC involved in sn-glycerol-3-phosphate (G3P) import. Responsible for energy coupling to the transport system. In Salmonella typhi, this protein is sn-glycerol-3-phosphate import ATP-binding protein UgpC.